A 430-amino-acid chain; its full sequence is N-lysine methyltransferase SMYD2-B (430 aa).

Positions 5–239 constitute an SET domain; that stretch reads EGLERFDSPG…AGEEVFTSYI (235 aa). 15–17 contacts S-adenosyl-L-methionine; that stretch reads KGR. 8 residues coordinate Zn(2+): Cys-50, Cys-53, Cys-63, Cys-66, Cys-72, Cys-76, His-84, and Cys-88. The MYND-type zinc-finger motif lies at 50-88; the sequence is CDFCFTRKEGLSKCGKCKQAFYCNVDCQKGDWPMHKLEC. S-adenosyl-L-methionine is bound by residues His-135, 204–205, and 256–258; these read NH and YFF.

It belongs to the class V-like SAM-binding methyltransferase superfamily.

It localises to the cytoplasm. Its subcellular location is the cytosol. It is found in the nucleus. The enzyme catalyses L-lysyl(4)-[histone H3] + 3 S-adenosyl-L-methionine = N(6),N(6),N(6)-trimethyl-L-lysyl(4)-[histone H3] + 3 S-adenosyl-L-homocysteine + 3 H(+). It catalyses the reaction L-lysyl-[protein] + S-adenosyl-L-methionine = N(6)-methyl-L-lysyl-[protein] + S-adenosyl-L-homocysteine + H(+). Its function is as follows. Protein-lysine N-methyltransferase that methylates both histones and non-histone proteins, including p53/TP53 and RB1. Specifically trimethylates histone H3 'Lys-4' (H3K4me3) in vivo. The activity requires interaction with HSP90alpha. Shows even higher methyltransferase activity on p53/TP53. Monomethylates 'Lys-370' of p53/TP53, leading to decreased DNA-binding activity and subsequent transcriptional regulation activity of p53/TP53. Monomethylates RB1 at 'Lys-860'. This chain is N-lysine methyltransferase SMYD2-B (smyd2-b), found in Xenopus laevis (African clawed frog).